Here is a 176-residue protein sequence, read N- to C-terminus: NAD(P)H-quinone oxidoreductase subunit 6, chloroplastic (176 aa).

5 helical membrane-spanning segments follow: residues 10–30 (FLLVFLGSGLILGALGVVLFT), 33–53 (IFSAFSLGLVLVCISLFYILA), 63–83 (LLIYVGAINVLIIFSVMFMSG), 105–125 (ISLFVSLISTILNTSWYGIIW), and 152–172 (FFLPFELISIILLVSLIGAIA).

Belongs to the complex I subunit 6 family. NDH is composed of at least 16 different subunits, 5 of which are encoded in the nucleus.

The protein localises to the plastid. It localises to the chloroplast thylakoid membrane. It catalyses the reaction a plastoquinone + NADH + (n+1) H(+)(in) = a plastoquinol + NAD(+) + n H(+)(out). It carries out the reaction a plastoquinone + NADPH + (n+1) H(+)(in) = a plastoquinol + NADP(+) + n H(+)(out). NDH shuttles electrons from NAD(P)H:plastoquinone, via FMN and iron-sulfur (Fe-S) centers, to quinones in the photosynthetic chain and possibly in a chloroplast respiratory chain. The immediate electron acceptor for the enzyme in this species is believed to be plastoquinone. Couples the redox reaction to proton translocation, and thus conserves the redox energy in a proton gradient. The protein is NAD(P)H-quinone oxidoreductase subunit 6, chloroplastic (ndhG) of Spinacia oleracea (Spinach).